Reading from the N-terminus, the 954-residue chain is Kinesin-like protein KIN-7A (954 aa).

Residues M1 to R29 form a disordered region. Over residues T17–T28 the composition is skewed to low complexity. One can recognise a Kinesin motor domain in the interval K34–V354. Residue G119–T126 coordinates ATP. Coiled-coil stretches lie at residues V363–Q436 and L480–S588. Disordered stretches follow at residues P624–N689 and G741–D762. The segment covering P630–P639 has biased composition (low complexity). 2 stretches are compositionally biased toward basic and acidic residues: residues L640–E660 and K666–R681.

It belongs to the TRAFAC class myosin-kinesin ATPase superfamily. Kinesin family. KIN-7 subfamily. Ubiquitous with a preferential expression in the shoot apical meristem (SAM).

In terms of biological role, may be essential to promote the progression of cytokinesis during node-internode differentiation. The protein is Kinesin-like protein KIN-7A of Oryza sativa subsp. japonica (Rice).